The sequence spans 470 residues: MSTNQGSLWGGRFAAGPSEALVALSKSTHFDWVLAPYDITASRAHTKMLFRAGLLNEEQRDGLLAGLDNLAEDVADGSFLPLVTDEDVHAALERGLIDRVGPDLGGRLRAGRSRNDQVATLFRMWLRDAVRRVAAGALEVVDALANQAAEHSSTIMPGKTHLQSAQPILLAHHLLAHAHPLLRDVGRIVDFDKRAAVSPYGSGALAGSSLGLDPDAMAQDLGFPAAADNSVDATAARDFAAEAAFVFAMIAVDLSRLAEDIILWSSTEFGYARLHDSWSTGSSIMPQKKNPDIAELARGKSGRLIGNLAGLLATLKAQPLAYNRDLQEDKEPVFDSVAQLELLLPAMAGLVASLTFNVERMAALAPAGYTLATDIAEWLVRQGVPFRSAHEAAGTAVRVAEGRGVGLEELTDDELAAISANLTPQVREVLTVEGSVSSRAARGGTAPSQAAKQLTVVRANANQLRQLLMR.

This sequence belongs to the lyase 1 family. Argininosuccinate lyase subfamily.

Its subcellular location is the cytoplasm. The enzyme catalyses 2-(N(omega)-L-arginino)succinate = fumarate + L-arginine. The protein operates within amino-acid biosynthesis; L-arginine biosynthesis; L-arginine from L-ornithine and carbamoyl phosphate: step 3/3. The polypeptide is Argininosuccinate lyase (Mycobacterium leprae (strain Br4923)).